The following is a 264-amino-acid chain: tRNA (guanine-N(1)-)-methyltransferase (264 aa).

S-adenosyl-L-methionine is bound by residues glycine 113 and 133-138; that span reads IGDYVL. Positions 244–264 are disordered; that stretch reads VQQAATPGGQRRPPWHRDSRA.

This sequence belongs to the RNA methyltransferase TrmD family. In terms of assembly, homodimer.

The protein resides in the cytoplasm. The catalysed reaction is guanosine(37) in tRNA + S-adenosyl-L-methionine = N(1)-methylguanosine(37) in tRNA + S-adenosyl-L-homocysteine + H(+). Functionally, specifically methylates guanosine-37 in various tRNAs. The chain is tRNA (guanine-N(1)-)-methyltransferase from Frankia alni (strain DSM 45986 / CECT 9034 / ACN14a).